A 361-amino-acid chain; its full sequence is Phosphoserine aminotransferase (361 aa).

Residue Arg43 participates in L-glutamate binding. Residues 77–78 (AS), Trp103, Thr153, Asp173, and Gln196 each bind pyridoxal 5'-phosphate. Lys197 carries the post-translational modification N6-(pyridoxal phosphate)lysine. Position 238-239 (238-239 (NT)) interacts with pyridoxal 5'-phosphate.

This sequence belongs to the class-V pyridoxal-phosphate-dependent aminotransferase family. SerC subfamily. Homodimer. Pyridoxal 5'-phosphate is required as a cofactor.

It is found in the cytoplasm. It catalyses the reaction O-phospho-L-serine + 2-oxoglutarate = 3-phosphooxypyruvate + L-glutamate. The catalysed reaction is 4-(phosphooxy)-L-threonine + 2-oxoglutarate = (R)-3-hydroxy-2-oxo-4-phosphooxybutanoate + L-glutamate. It participates in amino-acid biosynthesis; L-serine biosynthesis; L-serine from 3-phospho-D-glycerate: step 2/3. It functions in the pathway cofactor biosynthesis; pyridoxine 5'-phosphate biosynthesis; pyridoxine 5'-phosphate from D-erythrose 4-phosphate: step 3/5. Catalyzes the reversible conversion of 3-phosphohydroxypyruvate to phosphoserine and of 3-hydroxy-2-oxo-4-phosphonooxybutanoate to phosphohydroxythreonine. This Azotobacter vinelandii (strain DJ / ATCC BAA-1303) protein is Phosphoserine aminotransferase.